The chain runs to 400 residues: Phosphoglycerate kinase (400 aa).

Residues 21 to 23 (DFN), arginine 37, 60 to 63 (HLGR), arginine 121, and arginine 154 each bind substrate. ATP contacts are provided by residues lysine 204, glutamate 326, and 355 to 358 (GGDS).

This sequence belongs to the phosphoglycerate kinase family. As to quaternary structure, monomer.

It localises to the cytoplasm. It catalyses the reaction (2R)-3-phosphoglycerate + ATP = (2R)-3-phospho-glyceroyl phosphate + ADP. It participates in carbohydrate degradation; glycolysis; pyruvate from D-glyceraldehyde 3-phosphate: step 2/5. The protein is Phosphoglycerate kinase of Chloroflexus aggregans (strain MD-66 / DSM 9485).